A 320-amino-acid chain; its full sequence is 1-aminocyclopropane-1-carboxylate oxidase 3 (320 aa).

The Fe2OG dioxygenase domain occupies 154–254 (PNFGTKVSNY…RMSIASFYNP (101 aa)). Residues H178, D180, and H235 each coordinate Fe cation.

This sequence belongs to the iron/ascorbate-dependent oxidoreductase family. It depends on Fe cation as a cofactor. As to expression, flowers.

The catalysed reaction is 1-aminocyclopropane-1-carboxylate + L-ascorbate + O2 = ethene + L-dehydroascorbate + hydrogen cyanide + CO2 + 2 H2O. The protein operates within alkene biosynthesis; ethylene biosynthesis via S-adenosyl-L-methionine; ethylene from S-adenosyl-L-methionine: step 2/2. This is 1-aminocyclopropane-1-carboxylate oxidase 3 (ACO3) from Cucumis melo (Muskmelon).